The sequence spans 314 residues: Leucotoxin LukE (314 aa).

Residues 1 to 28 (MFKKKMLAASLSVGLIAPLASPIQESRA) form the signal peptide.

It belongs to the aerolysin family. In terms of assembly, toxicity requires sequential binding and synergistic association of a class S and a class F component which form heterooligomeric complexes. LukE (class S) associates with LukD (class F). LukE can also associate with HlgB.

It is found in the secreted. Functionally, part of a bi-component leucotoxin that acts by forming pores in the membrane of the target cells. LukE-LukD is as effective as the Panton-Valentine leucocidin (PVL) for inducing dermonecrosis when injected in the rabbit skin, but not hemolytic and poorly leucotoxic on human blood cells compared to other leucotoxins expressed by S.aureus. The protein is Leucotoxin LukE (lukE) of Staphylococcus aureus.